The sequence spans 78 residues: Beta-defensin 135 (78 aa).

The first 24 residues, 1 to 24 (MATRSVLLALVVLNLLFYVPPGRS), serve as a signal peptide directing secretion. 2 disulfides stabilise this stretch: cysteine 37/cysteine 64 and cysteine 48/cysteine 66.

It belongs to the beta-defensin family.

The protein localises to the secreted. Has antibacterial activity. The polypeptide is Beta-defensin 135 (DEFB135) (Pan troglodytes (Chimpanzee)).